Here is a 103-residue protein sequence, read N- to C-terminus: DNA-directed RNA polymerase subunit omega (103 aa).

This sequence belongs to the RNA polymerase subunit omega family. As to quaternary structure, the RNAP catalytic core consists of 2 alpha, 1 beta, 1 beta' and 1 omega subunit. When a sigma factor is associated with the core the holoenzyme is formed, which can initiate transcription.

The enzyme catalyses RNA(n) + a ribonucleoside 5'-triphosphate = RNA(n+1) + diphosphate. Promotes RNA polymerase assembly. Latches the N- and C-terminal regions of the beta' subunit thereby facilitating its interaction with the beta and alpha subunits. This Streptococcus agalactiae serotype III (strain NEM316) protein is DNA-directed RNA polymerase subunit omega.